Reading from the N-terminus, the 217-residue chain is Thiamine-phosphate synthase (217 aa).

Residues 41–45 and asparagine 76 each bind 4-amino-2-methyl-5-(diphosphooxymethyl)pyrimidine; that span reads QYRDK. Mg(2+) contacts are provided by aspartate 77 and aspartate 96. Serine 115 is a binding site for 4-amino-2-methyl-5-(diphosphooxymethyl)pyrimidine. 142–144 contributes to the 2-[(2R,5Z)-2-carboxy-4-methylthiazol-5(2H)-ylidene]ethyl phosphate binding site; it reads SPS. Lysine 145 is a 4-amino-2-methyl-5-(diphosphooxymethyl)pyrimidine binding site. 2-[(2R,5Z)-2-carboxy-4-methylthiazol-5(2H)-ylidene]ethyl phosphate contacts are provided by residues glycine 172 and 192-193; that span reads IS.

The protein belongs to the thiamine-phosphate synthase family. Mg(2+) is required as a cofactor.

The enzyme catalyses 2-[(2R,5Z)-2-carboxy-4-methylthiazol-5(2H)-ylidene]ethyl phosphate + 4-amino-2-methyl-5-(diphosphooxymethyl)pyrimidine + 2 H(+) = thiamine phosphate + CO2 + diphosphate. It carries out the reaction 2-(2-carboxy-4-methylthiazol-5-yl)ethyl phosphate + 4-amino-2-methyl-5-(diphosphooxymethyl)pyrimidine + 2 H(+) = thiamine phosphate + CO2 + diphosphate. The catalysed reaction is 4-methyl-5-(2-phosphooxyethyl)-thiazole + 4-amino-2-methyl-5-(diphosphooxymethyl)pyrimidine + H(+) = thiamine phosphate + diphosphate. It functions in the pathway cofactor biosynthesis; thiamine diphosphate biosynthesis; thiamine phosphate from 4-amino-2-methyl-5-diphosphomethylpyrimidine and 4-methyl-5-(2-phosphoethyl)-thiazole: step 1/1. Its function is as follows. Condenses 4-methyl-5-(beta-hydroxyethyl)thiazole monophosphate (THZ-P) and 2-methyl-4-amino-5-hydroxymethyl pyrimidine pyrophosphate (HMP-PP) to form thiamine monophosphate (TMP). In Acidithiobacillus ferrooxidans (strain ATCC 23270 / DSM 14882 / CIP 104768 / NCIMB 8455) (Ferrobacillus ferrooxidans (strain ATCC 23270)), this protein is Thiamine-phosphate synthase.